We begin with the raw amino-acid sequence, 275 residues long: Uroplakin-3b (275 aa).

The N-terminal stretch at 1–26 (MVRTRWQPPLRALLLLVLVWLPQSLS) is a signal peptide. The Lumenal segment spans residues 27-196 (LDLIAYVPQI…DTWPGRRSGC (170 aa)). A glycan (N-linked (GlcNAc...) asparagine) is linked at Asn-77. The chain crosses the membrane as a helical span at residues 197–217 (MIVITSILSALAGLLLLAFLA). Topologically, residues 218 to 275 (ASTTRFSSLWWPEEAPEQLRIGSFMGKRYMTHHIPPSEAATLPVGCEPGLDPLPSLSP) are cytoplasmic.

It belongs to the uroplakin-3 family. As to quaternary structure, heterodimer with uroplakin-1B (UPK1B). In terms of tissue distribution, expression is urothelium-specific.

It localises to the cell membrane. Functionally, component of the asymmetric unit membrane (AUM); a highly specialized biomembrane elaborated by terminally differentiated urothelial cells. May play an important role in AUM-cytoskeleton interaction in terminally differentiated urothelial cells. It also contributes to the formation of urothelial glycocalyx which may play an important role in preventing bacterial adherence. This is Uroplakin-3b (Upk3b) from Mus musculus (Mouse).